Reading from the N-terminus, the 206-residue chain is MATAWCLPWTLRRAGAWLLTPPLRCPRRALHKQADGTEFQSIYSLDKLYPESRGSDTAWKVPDDAQQTNKDIPLDRLTISYCRSSGPGGQNVNKVNSKAEVRFHLATAEWIAEPVRQKMAIMHKNKINRSGELILTSECSRYQFRNLADCLQKIRDMIAEASQTPKEPSKEDAALHRIRIENMNRERLRKKRIHSAIKTGRRVDMD.

A mitochondrion-targeting transit peptide spans 1-29; sequence MATAWCLPWTLRRAGAWLLTPPLRCPRRA.

The protein belongs to the prokaryotic/mitochondrial release factor family. Mitochondrion-specific ribosomal protein mL62 subfamily. As to quaternary structure, component of the mitochondrial 39S ribosomal subunit.

It localises to the mitochondrion. It carries out the reaction an N-acyl-L-alpha-aminoacyl-tRNA + H2O = an N-acyl-L-amino acid + a tRNA + H(+). Functionally, essential peptidyl-tRNA hydrolase component of the mitochondrial large ribosomal subunit. Acts as a codon-independent translation release factor that has lost all stop codon specificity and directs the termination of translation in mitochondrion, possibly in case of abortive elongation. May be involved in the hydrolysis of peptidyl-tRNAs that have been prematurely terminated and thus in the recycling of stalled mitochondrial ribosomes. In Ailuropoda melanoleuca (Giant panda), this protein is Large ribosomal subunit protein mL62.